The following is a 413-amino-acid chain: MAFIAALGLLMAGICPAVLCDGTLGRDTLSHEDHGKGRQLHSLTLASSNTDFALSLYKKLALRNPDKNVVFSPLSISAALTILSLGAKDSTMEEILEGLKFNLTEITEEEIHQGFGHLLQRLSQPEDQVEINTGSALFIDKEQPILSEFQEKTRALYQAEAFIADFKQPNEAKKLINDYVSNQTQGKIAELFSDLEERTSMVLVNYLLFKGKWKVPFNPNDTFESEFYLDEKRSVKVPMMKIKEVTTPYVRDEELSCSVLELKYTGNASALFILPDQGKMQQVESSLQPETLKKWKDSLIPRIINDLRMPKFSISTDYSLKEVLPELGIKKVFSQQADLSRITGTKDLYVSQVVHKAVLDVDETGTEATAATGVATVIRRQPRTLNFNRPFMVVITDMDSQSILFVAKITNPK.

Residues 1 to 28 (MAFIAALGLLMAGICPAVLCDGTLGRDT) form the signal peptide. S30 bears the Phosphoserine mark. N-linked (GlcNAc...) asparagine glycans are attached at residues N102, N182, N220, and N267. The tract at residues 365-389 (GTEATAATGVATVIRRQPRTLNFNR) is RCL.

It belongs to the serpin family. N-glycosylated. As to expression, liver.

The protein resides in the secreted. The sequence is that of Serine protease inhibitor A3L (Serpina3l) from Rattus norvegicus (Rat).